Consider the following 188-residue polypeptide: MADNVFKSHDIGLRAQKKILSRMATKNIAKTFIDGTTASLLDNLYRLCKMHTGNKAKAEKLIKNIIKIVIKIGVLHRNNQFSDEELQKAELFKRKFQNTQLSIISFYEVDFTFDLPYLQKSIAESQVALKSIVQPHLTEKSLGRIDEVFDFFGEEALLETAFRPDSPYREVMGKIVADINAAMETGDI.

The protein belongs to the TNFAIP8 family. Interacts with the Ste20-like MAP kinase msn.

It is found in the cytoplasm. The protein resides in the cytoskeleton. Important for modulating JNK signaling, cytoskeletal remodeling and autophagy in larval salivary glands. During salivary gland development, involved in the positive regulation of the JNK signaling pathway, acting downstream of the TNF ligand egr and upstream of bsk. This chain is Protein salivary glands marred, found in Drosophila melanogaster (Fruit fly).